We begin with the raw amino-acid sequence, 141 residues long: Protein stum homolog (141 aa).

Position 26 is a phosphoserine (Ser26). Transmembrane regions (helical) follow at residues 51–71 (FPVA…GTFV) and 87–107 (RHVC…ILTA).

This sequence belongs to the SPEC3 family. Stum subfamily.

It localises to the membrane. The protein is Protein stum homolog of Homo sapiens (Human).